Reading from the N-terminus, the 243-residue chain is uncharacterized protein (243 aa).

Transmembrane regions (helical) follow at residues Ala38–Phe58, Phe99–Tyr119, Phe143–Leu163, and Ala204–Phe224.

The protein resides in the cell membrane. This is an uncharacterized protein from Mycoplasma pneumoniae (strain ATCC 29342 / M129 / Subtype 1) (Mycoplasmoides pneumoniae).